The primary structure comprises 406 residues: Peptide transporter imqD (406 aa).

A disordered region spans residues 1 to 25 (MTAPADSTEKSETSETTTLQTTEVS). Residues 14–25 (SETTTLQTTEVS) are compositionally biased toward low complexity. The next 6 helical transmembrane spans lie at 184–204 (GLVA…LSQA), 220–240 (IPND…GPVI), 262–282 (ATGF…QKII), 309–329 (VFLQ…SFVT), 344–364 (AVVQ…GIAI), and 373–393 (LIWM…VFWI).

It belongs to the major facilitator superfamily. Proton-dependent oligopeptide transporter (POT/PTR) (TC 2.A.17) family.

It localises to the membrane. In terms of biological role, peptide transporter; part of the gene cluster that mediates the biosynthesis of imizoquins A to D, tripeptide-derived alkaloids that serve a protective role against oxidative stress that are essential for normal germination. This chain is Peptide transporter imqD, found in Aspergillus flavus (strain ATCC 200026 / FGSC A1120 / IAM 13836 / NRRL 3357 / JCM 12722 / SRRC 167).